The sequence spans 447 residues: Phospholipase A(1) DAD1, chloroplastic (447 aa).

A chloroplast-targeting transit peptide spans 1–46 (MRFSLSPVRPHSVVVPSLPKQDVVSYISGTTSNRQCRCVLTLPSPS). The GXSXG signature appears at 293–297 (GHSLG). S295 (acyl-ester intermediate) is an active-site residue. Catalysis depends on charge relay system residues D352 and H418.

This sequence belongs to the AB hydrolase superfamily. Lipase family. As to expression, expressed in flower buds, but not in leaves or roots. Restricted to the stamen filaments immediately before flower opening.

It is found in the plastid. The protein resides in the chloroplast. It catalyses the reaction a 1,2-diacyl-sn-glycero-3-phosphocholine + H2O = a 2-acyl-sn-glycero-3-phosphocholine + a fatty acid + H(+). The catalysed reaction is 1-hexadecanoyl-2-(9Z,12Z-octadecadienoyl)-sn-glycero-3-phosphocholine + H2O = 2-(9Z,12Z-octadecadienoyl)-sn-glycero-3-phosphocholine + hexadecanoate + H(+). In terms of biological role, sn-1-specific phospholipase that releases free fatty acids from phospholipids. Low activity on galactolipids and triacylglycerols. Catalyzes the initial step of jasmonic acid biosynthesis. Not essential for jasmonate biosynthesis after wounding or upon pathogen infection. The chain is Phospholipase A(1) DAD1, chloroplastic from Arabidopsis thaliana (Mouse-ear cress).